The sequence spans 614 residues: MIKKATLLTAFSVTAFSAWAQDTSPDTLVVTANRFQQPRSAVLAPVTIVTRQDIERWQSTSVNDVLRRLPGVDIAQSGGAGQNSSIFIRGTNSSHVLVLIDGVRLNLAGVSGSADLSQFPVSLVQRIEYIRGPRSAIYGSDAIGGVVNIITTRDNPGTELTAGWGSNSYQNYDISTQQQLGENTRATLIGDYEYTKGFDVVAKGGTGMQAQPDRDGFLSKTLYGALEHTFSDRWSGFVRGYGYDNRTDYDAYYSPGSPLIDTRKLYSQSWDAGLHFNGERIQSQLVSSYSHSKDYNYDPHYGRYDTSATLDEMKQYNVQWTNSVVVGHGNVGAGVDWQKQTTTPGTGYVPEGYDQRNTGVYLTGLQQLGDFTLEAAARSDDNSQFGRHGTWQTSAGWEFIEGYRFIASYGTSYKAPNLGQLYGYYGNPNLNPEKSKQWEGAFEGLTAGVSWRISGYRNDINDMIDYDDHLQKYYNEGKARIKGIEATANFDTGPLTHTVSYDYVDARNAITDTPLPRRSKQMAKYQLDWDVYDFDWGMTYQYLGSRYDSDYSAYPYRTVKMGGVSLWDLTVAYPVTSHLTVRGKIANLFDKDYETVYGYQTAGREYTLSGSYTF.

The first 20 residues, 1-20, serve as a signal peptide directing secretion; sequence MIKKATLLTAFSVTAFSAWA. The TonB box motif lies at 26–33; that stretch reads DTLVVTAN. The region spanning 38-152 is the TBDR plug domain; the sequence is PRSAVLAPVT…IGGVVNIITT (115 aa). Residues serine 85, asparagine 92, and 110–111 each bind cyanocob(III)alamin; that span reads VS. One can recognise a TBDR beta-barrel domain in the interval 155–614; sequence NPGTELTAGW…EYTLSGSYTF (460 aa). Transmembrane regions (beta stranded) follow at residues 158 to 165, 169 to 178, and 184 to 195; these read TELTAGWG, YQNYDISTQQ, and TRATLIGDYEYT. 4 residues coordinate Ca(2+): aspartate 199, glutamine 211, aspartate 213, and aspartate 215. The next 2 beta stranded transmembrane spans lie at 217–227 and 232–248; these read FLSKTLYGALE and DRWS…NRTD. Ca(2+) is bound by residues tyrosine 249 and aspartate 250. Residue alanine 251 participates in cyanocob(III)alamin binding. Residue aspartate 261 participates in Ca(2+) binding. The next 14 beta stranded transmembrane spans lie at 263–277, 279–296, 309–325, 328–337, 353–369, 371–381, 385–400, 403–417, 434–443, 449–458, 473–490, 494–509, 517–529, and 535–550; these read RKLY…LHFN, ERIQ…KDYN, TLDE…NSVV, HGNVGAGVDW, YDQR…QQLG, FTLEAAARSDD, FGRH…WEFI, YRFI…KAPN, KSKQWEGAFE, VSWRISGYRN, YYNE…TANF, PLTH…ARNA, RRSK…QLDW, and DWGM…YDSD. Residue threonine 309 participates in cyanocob(III)alamin binding. Arginine 517 serves as a coordination point for cyanocob(III)alamin. Residue tyrosine 551 coordinates cyanocob(III)alamin. Transmembrane regions (beta stranded) follow at residues 558 to 572, 585 to 596, and 602 to 614; these read TVKM…LTVA, IANLFDKDYETV, and AGRE…SYTF. Positions 597–614 match the TonB C-terminal box motif; the sequence is YGYQTAGREYTLSGSYTF.

It belongs to the TonB-dependent receptor family. BtuB (TC 1.B.14.3.1) subfamily.

It localises to the cell outer membrane. In terms of biological role, involved in the active translocation of vitamin B12 (cyanocobalamin) across the outer membrane to the periplasmic space. It derives its energy for transport by interacting with the trans-periplasmic membrane protein TonB. This Salmonella typhimurium (strain LT2 / SGSC1412 / ATCC 700720) protein is Vitamin B12 transporter BtuB.